The following is a 297-amino-acid chain: MRPQLSDYQHLASGKVRELYRVDDEHLLVVASDRISAYDYVLDSMIPDKGRILTAMSVFFFGLVDAPNHLAGPPDDPRIPDEVLGRALVVRQLEMLPVECVARGYLTGSGLLDYQASGKVCGIALPPGLVGASKFAEPLFTPATKAELGDHDENISFAQVIETVGGVRANQLRDRTLQIYVKAADHALTRGVIIADTKFEFGADRDGNLLLADEIFTPDSSRYWPADEYRAGVVQNSFDKQFVRNWLTSAESGWDRGGDQPPPPLPDHIIEATRERYIEAYERISGLGFGEWIGPGA.

The protein belongs to the SAICAR synthetase family.

The catalysed reaction is 5-amino-1-(5-phospho-D-ribosyl)imidazole-4-carboxylate + L-aspartate + ATP = (2S)-2-[5-amino-1-(5-phospho-beta-D-ribosyl)imidazole-4-carboxamido]succinate + ADP + phosphate + 2 H(+). It functions in the pathway purine metabolism; IMP biosynthesis via de novo pathway; 5-amino-1-(5-phospho-D-ribosyl)imidazole-4-carboxamide from 5-amino-1-(5-phospho-D-ribosyl)imidazole-4-carboxylate: step 1/2. This is Phosphoribosylaminoimidazole-succinocarboxamide synthase from Mycobacterium ulcerans (strain Agy99).